The following is a 173-amino-acid chain: Crossover junction endodeoxyribonuclease RuvC (173 aa).

Residues D8, E67, and D139 contribute to the active site. Mg(2+) is bound by residues D8, E67, and D139.

It belongs to the RuvC family. In terms of assembly, homodimer which binds Holliday junction (HJ) DNA. The HJ becomes 2-fold symmetrical on binding to RuvC with unstacked arms; it has a different conformation from HJ DNA in complex with RuvA. In the full resolvosome a probable DNA-RuvA(4)-RuvB(12)-RuvC(2) complex forms which resolves the HJ. Mg(2+) serves as cofactor.

It is found in the cytoplasm. It catalyses the reaction Endonucleolytic cleavage at a junction such as a reciprocal single-stranded crossover between two homologous DNA duplexes (Holliday junction).. The RuvA-RuvB-RuvC complex processes Holliday junction (HJ) DNA during genetic recombination and DNA repair. Endonuclease that resolves HJ intermediates. Cleaves cruciform DNA by making single-stranded nicks across the HJ at symmetrical positions within the homologous arms, yielding a 5'-phosphate and a 3'-hydroxyl group; requires a central core of homology in the junction. The consensus cleavage sequence is 5'-(A/T)TT(C/G)-3'. Cleavage occurs on the 3'-side of the TT dinucleotide at the point of strand exchange. HJ branch migration catalyzed by RuvA-RuvB allows RuvC to scan DNA until it finds its consensus sequence, where it cleaves and resolves the cruciform DNA. The chain is Crossover junction endodeoxyribonuclease RuvC from Shewanella piezotolerans (strain WP3 / JCM 13877).